The following is a 209-amino-acid chain: MALLAEHLLKPLPADKQIETGPFLEAVSHLPPFFDCLGSPVFTPIKADISGNITKIKAVYDTNPAKFRTLQNILEVEKEMYGAEWPKVGATLALMWLKRGLRFIQVFLQSICDGERDENHPNLIRVNATKAYEMALKKYHGWIVQKIFQAALYAAPYKSDFLKALSKGQNVTEEECLEKIRLFLVNYTATIDVIYEMYTQMNAELNYKV.

At A2 the chain carries N-acetylalanine. A run of 2 repeats spans residues 45–55 (IKADISGNITK) and 56–66 (IKAVYDTNPAK). Residues 45–66 (IKADISGNITKIKAVYDTNPAK) are 2 X 12 AA approximate tandem repeats. Beta-D-galactosyl-(1-&gt;4)-beta-D-glucosyl-(1&lt;-&gt;1)-N-[(9Z)-octadecenoyl]-sphing-4-enine is bound at residue 48–55 (DISGNITK). Residues H140 and Y207 each contribute to the beta-D-galactosyl-(1-&gt;4)-beta-D-glucosyl-(1&lt;-&gt;1)-N-[(9Z)-octadecenoyl]-sphing-4-enine site.

This sequence belongs to the GLTP family. Monomer. As to expression, detected in fibroblasts (at protein level). Detected in fibroblasts and in various cancer cell lines.

The protein localises to the cytoplasm. In terms of biological role, accelerates the intermembrane transfer of various glycolipids. Catalyzes the transfer of various glycosphingolipids between membranes but does not catalyze the transfer of phospholipids. May be involved in the intracellular translocation of glucosylceramides. This Homo sapiens (Human) protein is Glycolipid transfer protein (GLTP).